The chain runs to 62 residues: Pelophylaxin-4 (62 aa).

The signal sequence occupies residues 1 to 22 (MLTLKKSMLLIFFLGTINFSLC). The propeptide occupies 23–45 (EQERNADEEERRDEPEERDVEVQ). L60 carries the leucine amide modification. Residue G61 is a propeptide.

Expressed by the skin glands.

It is found in the secreted. Antimicrobial peptide. This is Pelophylaxin-4 from Pelophylax fukienensis (Fukien gold-striped pond frog).